Here is a 502-residue protein sequence, read N- to C-terminus: Basic immunoglobulin-like variable motif-containing protein (502 aa).

2 disordered regions span residues 1–32 (MPNA…LQGA) and 438–460 (SQHP…SKKQ). The span at 12 to 26 (DPGHGEHTSENKSPE) shows a compositional bias: basic and acidic residues.

Belongs to the BIVM family.

Its subcellular location is the cytoplasm. The protein resides in the nucleus. The protein is Basic immunoglobulin-like variable motif-containing protein (Bivm) of Mus musculus (Mouse).